The chain runs to 221 residues: LHFPL tetraspan subfamily member 5 protein (221 aa).

Residues 1–24 (MPKLLPAQEAARIYHTNYVRNARA) are Cytoplasmic-facing. Residues 25 to 45 (MGVLWALFTLCFSILMVVTFI) traverse the membrane as a helical segment. Residues 46 to 98 (QPYWIGDSIDTPQAGYFGLFSYCIGNALTGELICKGSPLDFGTIPSSAFKTAM) lie on the Extracellular side of the membrane. The helical transmembrane segment at 99-119 (FFVGISTFLIIGSILCFSLFF) threads the bilayer. Residues 120–128 (FCNAATVYK) are Cytoplasmic-facing. Residues 129-149 (VCAWMQLAAATGLMIGCLIYP) traverse the membrane as a helical segment. The Extracellular portion of the chain corresponds to 150–179 (DGWDSSEVKRMCGDKTDKYTLGACTVRWAY). A helical membrane pass occupies residues 180-200 (ILCIIGILDALILSFLAFVLG). At 201-221 (NRQDNLLPSDFKVESKEEGNE) the chain is on the cytoplasmic side.

The protein belongs to the LHFP family.

It is found in the cell membrane. Probable component of the mechanotransducer (MET) non-specific cation channel complex. This Gallus gallus (Chicken) protein is LHFPL tetraspan subfamily member 5 protein.